A 591-amino-acid polypeptide reads, in one-letter code: Fidgetin-like protein 1 (591 aa).

Disordered stretches follow at residues 1–117 (MYSP…KSSL) and 223–249 (GQEP…SQPI). Positions 17-26 (KRPETEENRG) are enriched in basic and acidic residues. Residues 76 to 93 (DDDPESIVIDEDDEEDEP) show a composition bias toward acidic residues. Polar residues predominate over residues 237-249 (RQSSSQSNHSQPI). ATP-binding positions include Ala319 and 359–364 (GTGKTM).

It belongs to the AAA ATPase family. Hexamer. Mg(2+) is required as a cofactor.

It localises to the nucleus. The enzyme catalyses ATP + H2O = ADP + phosphate + H(+). In terms of biological role, has a role in spindle assembly which acts in the progression through mitosis during embryogenesis. Required for fertility. This is Fidgetin-like protein 1 (figl-1) from Caenorhabditis briggsae.